The chain runs to 197 residues: Rac-like GTP-binding protein ARAC6 (197 aa).

13–20 (GDGAVGKT) is a GTP binding site. Positions 35–43 (YVPTVFDNF) match the Effector region motif. Residues 60–64 (DTAGQ) and 118–121 (TKLD) contribute to the GTP site. A GDP-binding site is contributed by serine 160. The residue at position 194 (cysteine 194) is a Cysteine methyl ester. A lipid anchor (S-geranylgeranyl cysteine) is attached at cysteine 194. The propeptide at 195–197 (SIL) is removed in mature form.

This sequence belongs to the small GTPase superfamily. Rho family. As to quaternary structure, interacts with SPK1. Ubiquitous. Preferentially expressed in mature pollen and pollen tubes.

The protein localises to the cytoplasm. It is found in the membrane. May be involved in cell polarity control during the actin-dependent tip growth of pollen tubes. In terms of biological role, inactive GDP-bound Rho GTPases reside in the cytosol, are found in a complex with Rho GDP-dissociation inhibitors (Rho GDIs), and are released from the GDI protein in order to translocate to membranes upon activation. The sequence is that of Rac-like GTP-binding protein ARAC6 (ARAC6) from Arabidopsis thaliana (Mouse-ear cress).